The sequence spans 325 residues: Malate dehydrogenase (325 aa).

9–15 (GAAGAIG) provides a ligand contact to NAD(+). Residues R90 and R96 each coordinate substrate. Residues N103, Q110, and 127–129 (VGN) contribute to the NAD(+) site. Residues N129 and R160 each coordinate substrate. The active-site Proton acceptor is H185.

This sequence belongs to the LDH/MDH superfamily. MDH type 2 family.

It catalyses the reaction (S)-malate + NAD(+) = oxaloacetate + NADH + H(+). Functionally, catalyzes the reversible oxidation of malate to oxaloacetate. This Rubrobacter xylanophilus (strain DSM 9941 / JCM 11954 / NBRC 16129 / PRD-1) protein is Malate dehydrogenase.